A 146-amino-acid chain; its full sequence is FAD synthase (146 aa).

ATP-binding positions include 9–10 (TF), 14–17 (HPGH), and D92.

It belongs to the archaeal FAD synthase family. In terms of assembly, homodimer. A divalent metal cation is required as a cofactor.

It carries out the reaction FMN + ATP + H(+) = FAD + diphosphate. It functions in the pathway cofactor biosynthesis; FAD biosynthesis; FAD from FMN: step 1/1. Functionally, catalyzes the transfer of the AMP portion of ATP to flavin mononucleotide (FMN) to produce flavin adenine dinucleotide (FAD) coenzyme. This is FAD synthase from Halobacterium salinarum (strain ATCC 29341 / DSM 671 / R1).